Reading from the N-terminus, the 365-residue chain is Putative outer membrane porin protein NmpC (365 aa).

A signal peptide spans 1–23 (MKKLTVAISAVAASVLMAMSAQA).

The protein belongs to the Gram-negative porin family. Homotrimer.

The protein resides in the cell outer membrane. The chain is Putative outer membrane porin protein NmpC (nmpC) from Escherichia coli (strain K12).